The chain runs to 140 residues: Putative esterase MT1895 (140 aa).

The protein belongs to the thioesterase PaaI family.

This chain is Putative esterase MT1895, found in Mycobacterium tuberculosis (strain CDC 1551 / Oshkosh).